The chain runs to 154 residues: MLLFSKKIAQHKGGICLEGIVRFGVSMESKLLKQFDELIKKKNYNNRSEAIRDLIRDFIVENQWEAEDVETIGTITYVFNHEVREINDKLTDMQHKHYKNIISTMHVHLDEHNCIEVMIVRGKAKEIVKIADEIISTRGVKHGKLVMTTTGENL.

Ni(2+) is bound by residues His-95, His-106, His-108, and Cys-114.

Belongs to the transcriptional regulatory CopG/NikR family. Ni(2+) serves as cofactor.

Functionally, transcriptional regulator. The sequence is that of Putative nickel-responsive regulator from Caldanaerobacter subterraneus subsp. tengcongensis (strain DSM 15242 / JCM 11007 / NBRC 100824 / MB4) (Thermoanaerobacter tengcongensis).